A 301-amino-acid chain; its full sequence is MDAEAEVVHPVGIEMVHRTRPEDAFPRNWVRLGRDRFAVEAVLPHDHPFFAPVGDDLHDPLLVAEAMRQAAMLAFHAGYGIPLGYHFLLTELDYVCHPEHLGVGGEPTEIGLEVFCSDLKWRAGLPAQGRVGWAVHRGDRLAATGVAATRFSTPKAYRRMRGDVPVEGISLPETAPVPASPAGRARVEDVVLSGTGREGVWELRVDTRHPTLFQRPNDHVPGMLLLEAARQAACLVAGPAGIVPVEARTRFHRYSEFGSPCWIGAVVQPGADEDTVTVRVTGHQDGETVFSTVLSGPRAHG.

It belongs to the AfsA family.

The catalysed reaction is a medium-chain 3-oxoacyl-[ACP] + dihydroxyacetone phosphate = a (4-alkanoyl-5-oxo-2,5-dihydrofuran-3-yl)methyl phosphate + holo-[ACP] + H2O. In terms of biological role, involved in the biosynthesis of A factor (2-isocapryloyl-3R-hydroxymethyl-gamma-butyrolactone), a gamma-butyrolactone autoregulator that triggers secondary metabolism and morphogenesis in Streptomyces. Catalyzes beta-ketoacyl transfer from 8-methyl-3-oxononanoyl-acyl carrier protein (ACP) to the hydroxyl group of dihydroxyacetone phosphate (DHAP), thus producing an 8-methyl-3-oxononanoyl-DHAP ester. The protein is 2-oxo-3-(phosphooxy)propyl 3-oxoalkanoate synthase of Streptomyces griseus.